The following is a 414-amino-acid chain: Esterase FrsA (414 aa).

Belongs to the FrsA family.

It catalyses the reaction a carboxylic ester + H2O = an alcohol + a carboxylate + H(+). Its function is as follows. Catalyzes the hydrolysis of esters. The polypeptide is Esterase FrsA (Shigella flexneri serotype 5b (strain 8401)).